The following is a 354-amino-acid chain: Clavesin-1 (354 aa).

One can recognise a CRAL-TRIO domain in the interval 118–279; it reads IKRALIDGFP…EFGGTLPPYD (162 aa). The segment at 333–354 is disordered; the sequence is AGTLKHEEKGENENTQPLLALD. The segment covering 335–344 has biased composition (basic and acidic residues); it reads TLKHEEKGEN. The segment covering 345–354 has biased composition (polar residues); sequence ENTQPLLALD.

In terms of assembly, forms a complex with clathrin heavy chain and gamma-adaptin.

Its subcellular location is the golgi apparatus. The protein localises to the trans-Golgi network membrane. The protein resides in the early endosome membrane. It is found in the cytoplasmic vesicle. It localises to the clathrin-coated vesicle. Required for normal morphology of late endosomes and/or lysosomes in neurons. Binds phosphatidylinositol 3,5-bisphosphate (PtdIns(3,5)P2). The sequence is that of Clavesin-1 (CLVS1) from Pongo abelii (Sumatran orangutan).